We begin with the raw amino-acid sequence, 692 residues long: Zinc finger protein 180 (692 aa).

Positions 72–145 (VNFKIVTVDF…GVKIERFTRD (74 aa)) constitute a KRAB domain. Glycyl lysine isopeptide (Lys-Gly) (interchain with G-Cter in SUMO2) cross-links involve residues Lys138, Lys159, Lys168, Lys191, Lys198, Lys226, Lys304, Lys313, and Lys330. C2H2-type zinc fingers lie at residues 353-375 (FECN…QRTH), 381-403 (YECS…QRTH), 409-431 (YRCN…QRTH), 437-459 (YECN…QRTH), 465-487 (YECN…QRIH), 493-515 (YECN…QRTH), 521-543 (FECN…QRTH), 549-571 (YECS…QRIH), 577-599 (YECN…QRTH), 605-627 (YECS…QRTH), 633-655 (FECN…QRTH), and 661-683 (FTCI…QATH).

It belongs to the krueppel C2H2-type zinc-finger protein family.

It is found in the nucleus. In terms of biological role, may be involved in transcriptional regulation. This is Zinc finger protein 180 (ZNF180) from Homo sapiens (Human).